The primary structure comprises 435 residues: Serine--tRNA ligase (435 aa).

Residue 241–243 (TAE) coordinates L-serine. ATP is bound at residue 272 to 274 (RSE). Glu295 serves as a coordination point for L-serine. An ATP-binding site is contributed by 359 to 362 (EISS). Ser395 serves as a coordination point for L-serine.

The protein belongs to the class-II aminoacyl-tRNA synthetase family. Type-1 seryl-tRNA synthetase subfamily. Homodimer. The tRNA molecule binds across the dimer.

The protein localises to the cytoplasm. The enzyme catalyses tRNA(Ser) + L-serine + ATP = L-seryl-tRNA(Ser) + AMP + diphosphate + H(+). It carries out the reaction tRNA(Sec) + L-serine + ATP = L-seryl-tRNA(Sec) + AMP + diphosphate + H(+). The protein operates within aminoacyl-tRNA biosynthesis; selenocysteinyl-tRNA(Sec) biosynthesis; L-seryl-tRNA(Sec) from L-serine and tRNA(Sec): step 1/1. Catalyzes the attachment of serine to tRNA(Ser). Is also able to aminoacylate tRNA(Sec) with serine, to form the misacylated tRNA L-seryl-tRNA(Sec), which will be further converted into selenocysteinyl-tRNA(Sec). The sequence is that of Serine--tRNA ligase from Actinobacillus pleuropneumoniae serotype 5b (strain L20).